The primary structure comprises 221 residues: Glutathione peroxidase 6 (221 aa).

Positions 1-19 (MAQKLWGSCLFSLFMAALA) are cleaved as a signal peptide. Residue Cys-73 is part of the active site.

Belongs to the glutathione peroxidase family.

Its subcellular location is the secreted. It catalyses the reaction 2 glutathione + H2O2 = glutathione disulfide + 2 H2O. In Mus musculus (Mouse), this protein is Glutathione peroxidase 6 (Gpx6).